The primary structure comprises 210 residues: Leucyl/phenylalanyl-tRNA--protein transferase (210 aa).

This sequence belongs to the L/F-transferase family.

The protein localises to the cytoplasm. The enzyme catalyses N-terminal L-lysyl-[protein] + L-leucyl-tRNA(Leu) = N-terminal L-leucyl-L-lysyl-[protein] + tRNA(Leu) + H(+). It carries out the reaction N-terminal L-arginyl-[protein] + L-leucyl-tRNA(Leu) = N-terminal L-leucyl-L-arginyl-[protein] + tRNA(Leu) + H(+). It catalyses the reaction L-phenylalanyl-tRNA(Phe) + an N-terminal L-alpha-aminoacyl-[protein] = an N-terminal L-phenylalanyl-L-alpha-aminoacyl-[protein] + tRNA(Phe). Its function is as follows. Functions in the N-end rule pathway of protein degradation where it conjugates Leu, Phe and, less efficiently, Met from aminoacyl-tRNAs to the N-termini of proteins containing an N-terminal arginine or lysine. The polypeptide is Leucyl/phenylalanyl-tRNA--protein transferase (Ruegeria sp. (strain TM1040) (Silicibacter sp.)).